The following is a 190-amino-acid chain: Xanthine phosphoribosyltransferase (190 aa).

Leu-20 and Asn-27 together coordinate xanthine. 128-132 (ANGKA) is a 5-phospho-alpha-D-ribose 1-diphosphate binding site. Residue Lys-156 participates in xanthine binding.

This sequence belongs to the purine/pyrimidine phosphoribosyltransferase family. Xpt subfamily. Homodimer.

The protein resides in the cytoplasm. The catalysed reaction is XMP + diphosphate = xanthine + 5-phospho-alpha-D-ribose 1-diphosphate. Its pathway is purine metabolism; XMP biosynthesis via salvage pathway; XMP from xanthine: step 1/1. Its function is as follows. Converts the preformed base xanthine, a product of nucleic acid breakdown, to xanthosine 5'-monophosphate (XMP), so it can be reused for RNA or DNA synthesis. In Pseudomonas fluorescens (strain SBW25), this protein is Xanthine phosphoribosyltransferase.